Reading from the N-terminus, the 832-residue chain is pre-rRNA 2'-O-ribose RNA methyltransferase FTSJ3 (832 aa).

Positions 56, 58, 76, 92, and 117 each coordinate S-adenosyl-L-methionine. The active-site Proton acceptor is K157. Disordered regions lie at residues 332–358 (INLS…ADEM), 485–523 (RLER…LEEK), and 546–631 (DADE…GLVE). Basic and acidic residues-rich tracts occupy residues 345–358 (EEEK…ADEM) and 485–495 (RLERERREQGV). A compositionally biased stretch (acidic residues) spans 503 to 514 (EEEEEEEEEEEN). A compositionally biased stretch (basic residues) spans 570 to 579 (KTKKKGQKKK). The span at 600 to 618 (AEAEAEQSSDDDSSSDEEG) shows a compositional bias: acidic residues. Residues 726–758 (IKKVAEAKARKKRRMLKKMEQMKKKAEAVVSTV) are a coiled coil. The segment at 795–832 (GPRVRRPPGVKGQFKVVDSRLKKDVRAQKRKEQKKRRK) is disordered. Over residues 811 to 821 (VDSRLKKDVRA) the composition is skewed to basic and acidic residues. A compositionally biased stretch (basic residues) spans 822-832 (QKRKEQKKRRK).

This sequence belongs to the class I-like SAM-binding methyltransferase superfamily. RNA methyltransferase RlmE family. SPB1 subfamily. In terms of assembly, interacts with NIP7.

Its subcellular location is the nucleus. It localises to the nucleolus. It carries out the reaction a ribonucleotide in rRNA + S-adenosyl-L-methionine = a 2'-O-methylribonucleotide in rRNA + S-adenosyl-L-homocysteine + H(+). In terms of biological role, RNA 2'-O-methyltransferase involved in the processing of the 34S pre-rRNA to 18S rRNA and in 40S ribosomal subunit formation. The chain is pre-rRNA 2'-O-ribose RNA methyltransferase FTSJ3 from Gallus gallus (Chicken).